The following is a 270-amino-acid chain: MASLRCFRELSRRATTVFSINQTRSISSFHGIEFSGTSISHGTVIPNRSLTRNLPWYSHWYRSQDRCFSSNTKDTDEDEESSEGEDDDEEEGEDFEDSADMEVEREYSPAEKVEEAEEIGYKVMGPLKPSERLFKPYEPVFAIVQIGSHQFKVSNGDSIFTEKLKFCDINDKLELTKVLLLGSASQTIIGRPILPDATVHAVVEEHALDEKVLIFKKKRRKNYRRTRGHRQELTKLRITDIQGIEKPEPKIVHKPSKEAVTEQTKAELVA.

The transit peptide at 1–68 directs the protein to the mitochondrion; it reads MASLRCFREL…HWYRSQDRCF (68 aa). Residues 68–113 form a disordered region; that stretch reads FSSNTKDTDEDEESSEGEDDDEEEGEDFEDSADMEVEREYSPAEKV. Residues 75-101 are compositionally biased toward acidic residues; sequence TDEDEESSEGEDDDEEEGEDFEDSADM. Basic and acidic residues predominate over residues 102 to 113; it reads EVEREYSPAEKV.

This sequence belongs to the bacterial ribosomal protein bL21 family. Component of the mitochondrial ribosome large subunit. Constitutively expressed in roots, stems, leaves, flowers, pistils and siliques.

The protein localises to the mitochondrion. Functionally, this protein binds to 23S ribosomal RNA in the presence of protein L20. Required for karyogamy during female gametophyte development, when the two polar nuclei fuse to form the diploid central cell nucleus, and during double fertilization of the egg cell and the central cell. The chain is Large ribosomal subunit protein bL21m from Arabidopsis thaliana (Mouse-ear cress).